The following is a 545-amino-acid chain: MSDAFETAAPPHATYDTVLVLDMGSQTSHLILRRLRSLGVYSEMLPCTQKIKDLGWKPVGVILSGGPSSVYADDAPGVDPLVFELGVPVLGVCYGNQLIAWRANPKSVAPGVNREYGETQMAIHKIGTHGDRLFEGLGDSLNVVMSHFDKVVQLPDGFQTIATTKNSEFAGIAHETQPIFGIQFHPEISHTEKGTDIIANFATKICGARPDWKMDDFSAREIKRIRELVGDKAQVIGAVSGGVDSTVAAKLMKEAIGDRFHAILVDQGLMRLNECEQVKETLDKHLGINLTVVDGSELFLGRLAGVTEPEAKRKIIGGTFIDLFEIEALRIEKEAENTDRAGKVEWFLQGTLYADIVESLSFKGAASSTIKSHHNAGGLPARMQNGEAQLKLLEPLRELFKDEVRAFGRQLGIHEELIGRHPFPGPGLGIRIIGEVTPERVEIVRKADHIFISMIREAGIYDEVTQAYAALDSSRAVGVQGDARVYGYICILRAVTSLDMMSAEPYEFTWSLMKAISRRIVNEVDGIARVVYDTTSKPPGTIELE.

Residues 17–211 form the Glutamine amidotransferase type-1 domain; that stretch reads TVLVLDMGSQ…ATKICGARPD (195 aa). The Nucleophile role is filled by Cys93. Catalysis depends on residues His185 and Glu187. Residues 212–420 enclose the GMPS ATP-PPase domain; that stretch reads WKMDDFSARE…LGIHEELIGR (209 aa). 240 to 246 contacts ATP; sequence SGGVDST. The XMP site is built by Arg313, Asp482, Lys537, and Glu543.

Homodimer. Mg(2+) is required as a cofactor.

The protein localises to the cytoplasm. Its subcellular location is the cytosol. It catalyses the reaction XMP + L-glutamine + ATP + H2O = GMP + L-glutamate + AMP + diphosphate + 2 H(+). Its pathway is purine metabolism; GMP biosynthesis; GMP from XMP (L-Gln route): step 1/1. In terms of biological role, catalyzes the conversion of xanthine monophosphate (XMP) to GMP in the presence of glutamine and ATP through an adenyl-XMP intermediate. This chain is GMP synthase [glutamine-hydrolyzing] (GUA1), found in Gibberella zeae (strain ATCC MYA-4620 / CBS 123657 / FGSC 9075 / NRRL 31084 / PH-1) (Wheat head blight fungus).